Consider the following 190-residue polypeptide: dCTP deaminase (190 aa).

Lys-113 to Arg-118 is a binding site for dCTP. Glu-139 serves as the catalytic Proton donor/acceptor. The dCTP site is built by Gln-158, Tyr-172, Lys-181, and Gln-182.

Belongs to the dCTP deaminase family. As to quaternary structure, homotrimer.

The catalysed reaction is dCTP + H2O + H(+) = dUTP + NH4(+). It functions in the pathway pyrimidine metabolism; dUMP biosynthesis; dUMP from dCTP (dUTP route): step 1/2. Its function is as follows. Catalyzes the deamination of dCTP to dUTP. In Chlamydia trachomatis serovar A (strain ATCC VR-571B / DSM 19440 / HAR-13), this protein is dCTP deaminase.